The sequence spans 384 residues: Chaperone protein DnaJ (384 aa).

The 65-residue stretch at 4–68 (DFYEILGVSR…EKRQMYDQMG (65 aa)) folds into the J domain. 2 disordered regions span residues 29–60 (REYHPDVSDDPDAEEKFKQAKKAKEVLTDEEK) and 73–131 (EQAE…GQDL). Over residues 42–60 (EEKFKQAKKAKEVLTDEEK) the composition is skewed to basic and acidic residues. Residues 80 to 101 (GAGGGGGRGGMGGDPFGGGAGG) show a composition bias toward gly residues. The span at 102-111 (FDMQDIFDQF) shows a compositional bias: low complexity. Over residues 112–121 (FGGGGRGGRG) the composition is skewed to gly residues. The segment at 145–227 (GATKQLNVTR…CRGNGVVQND (83 aa)) adopts a CR-type zinc-finger fold. Zn(2+) contacts are provided by Cys158, Cys161, Cys175, and Cys178. CXXCXGXG motif repeat units follow at residues 158-165 (CDDCDGAG), 175-182 (CPECNGQG), 201-208 (CRRCDGEG), and 215-222 (CSTCRGNG). Residues 160–191 (DCDGAGHPPGADSETCPECNGQGQTTQVQQTP) are disordered. Low complexity predominate over residues 180–190 (GQGQTTQVQQT). Zn(2+) contacts are provided by Cys201, Cys204, Cys215, and Cys218.

The protein belongs to the DnaJ family. As to quaternary structure, homodimer. Zn(2+) is required as a cofactor.

Its subcellular location is the cytoplasm. In terms of biological role, participates actively in the response to hyperosmotic and heat shock by preventing the aggregation of stress-denatured proteins and by disaggregating proteins, also in an autonomous, DnaK-independent fashion. Unfolded proteins bind initially to DnaJ; upon interaction with the DnaJ-bound protein, DnaK hydrolyzes its bound ATP, resulting in the formation of a stable complex. GrpE releases ADP from DnaK; ATP binding to DnaK triggers the release of the substrate protein, thus completing the reaction cycle. Several rounds of ATP-dependent interactions between DnaJ, DnaK and GrpE are required for fully efficient folding. Also involved, together with DnaK and GrpE, in the DNA replication of plasmids through activation of initiation proteins. In Haloarcula marismortui (strain ATCC 43049 / DSM 3752 / JCM 8966 / VKM B-1809) (Halobacterium marismortui), this protein is Chaperone protein DnaJ.